The sequence spans 74 residues: U6-agatoxin-Ao1a (74 aa).

Positions 1-19 are cleaved as a signal peptide; the sequence is MRFYIAFFFLLLAADMALS. Residues 20–30 constitute a propeptide that is removed on maturation; the sequence is FEIGNSEELER. 3 cysteine pairs are disulfide-bonded: C44/C56, C49/C61, and C55/C72.

As to expression, expressed by the venom gland.

The protein resides in the secreted. This Agelena orientalis (Funnel-web spider) protein is U6-agatoxin-Ao1a.